A 443-amino-acid chain; its full sequence is ATP synthase subunit b-delta (443 aa).

Residues 1–168 (MSTFIGQLIG…PSDAALDDAV (168 aa)) form an ATP synthase subunit b region. The chain crosses the membrane as a helical span at residues 4-24 (FIGQLIGFAVIVFLLVRFVVP). The tract at residues 169 to 443 (GSRMRSTSRE…LASAETQLPD (275 aa)) is ATP synthase subunit delta.

In the N-terminal section; belongs to the ATPase B chain family. It in the C-terminal section; belongs to the ATPase delta chain family. As to quaternary structure, F-type ATPases have 2 components, F(1) - the catalytic core - and F(0) - the membrane proton channel. F(1) has five subunits: alpha(3), beta(3), gamma(1), delta(1), epsilon(1). F(0) has three main subunits: a(1), b(2) and c(10-14). The alpha and beta chains form an alternating ring which encloses part of the gamma chain. F(1) is attached to F(0) by a central stalk formed by the gamma and epsilon chains, while a peripheral stalk is formed by the delta and b chains.

The protein localises to the cell membrane. Functionally, f(1)F(0) ATP synthase produces ATP from ADP in the presence of a proton or sodium gradient. F-type ATPases consist of two structural domains, F(1) containing the extramembraneous catalytic core and F(0) containing the membrane proton channel, linked together by a central stalk and a peripheral stalk. During catalysis, ATP synthesis in the catalytic domain of F(1) is coupled via a rotary mechanism of the central stalk subunits to proton translocation. Its function is as follows. This fusion protein includes a component of the F(0) channel (subunit b) and of the F(1) subunit (subunit delta). Two copies of subunit b and one of delta together form the peripheral 'stator' stalk which links F(1) to F(0). The polypeptide is ATP synthase subunit b-delta (atpFH) (Mycobacterium sp. (strain JLS)).